Reading from the N-terminus, the 424-residue chain is Satellite RNA 48 kDa protein (424 aa).

The tract at residues 51 to 83 (PRDGGGRKRKADGSQGRPSNNPGRPSRKWTEKT) is disordered.

It belongs to the nepovirus satellite RNA 48 kDa protein family.

This chain is Satellite RNA 48 kDa protein, found in Tomato black ring virus (strain L) (TBRV).